The primary structure comprises 126 residues: Fluoride-specific ion channel FluC 1 (126 aa).

The next 3 membrane-spanning stretches (helical) occupy residues 37 to 57 (HWGT…VLAL), 67 to 87 (IALL…TFVV), and 98 to 118 (LLAA…AAAA). Glycine 77 and serine 80 together coordinate Na(+).

Belongs to the fluoride channel Fluc/FEX (TC 1.A.43) family.

Its subcellular location is the cell inner membrane. The catalysed reaction is fluoride(in) = fluoride(out). Na(+) is not transported, but it plays an essential structural role and its presence is essential for fluoride channel function. In terms of biological role, fluoride-specific ion channel. Important for reducing fluoride concentration in the cell, thus reducing its toxicity. This is Fluoride-specific ion channel FluC 1 from Parasynechococcus marenigrum (strain WH8102).